The primary structure comprises 425 residues: Glutamate-1-semialdehyde 2,1-aminomutase (425 aa).

Lysine 265 carries the post-translational modification N6-(pyridoxal phosphate)lysine.

This sequence belongs to the class-III pyridoxal-phosphate-dependent aminotransferase family. HemL subfamily. In terms of assembly, homodimer. Requires pyridoxal 5'-phosphate as cofactor.

It localises to the cytoplasm. It carries out the reaction (S)-4-amino-5-oxopentanoate = 5-aminolevulinate. The protein operates within porphyrin-containing compound metabolism; protoporphyrin-IX biosynthesis; 5-aminolevulinate from L-glutamyl-tRNA(Glu): step 2/2. The chain is Glutamate-1-semialdehyde 2,1-aminomutase from Clostridium perfringens (strain SM101 / Type A).